The primary structure comprises 287 residues: Putative ankyrin repeat protein R791 (287 aa).

ANK repeat units lie at residues His-40–Phe-71, Asn-76–Thr-105, Asn-107–Lys-134, Thr-135–Ala-164, Lys-165–Ile-194, Asp-196–Thr-224, and Val-225–Ala-254.

The protein is Putative ankyrin repeat protein R791 of Acanthamoeba polyphaga (Amoeba).